A 241-amino-acid chain; its full sequence is 2-C-methyl-D-erythritol 4-phosphate cytidylyltransferase (241 aa).

This sequence belongs to the IspD/TarI cytidylyltransferase family. IspD subfamily.

The catalysed reaction is 2-C-methyl-D-erythritol 4-phosphate + CTP + H(+) = 4-CDP-2-C-methyl-D-erythritol + diphosphate. The protein operates within isoprenoid biosynthesis; isopentenyl diphosphate biosynthesis via DXP pathway; isopentenyl diphosphate from 1-deoxy-D-xylulose 5-phosphate: step 2/6. Functionally, catalyzes the formation of 4-diphosphocytidyl-2-C-methyl-D-erythritol from CTP and 2-C-methyl-D-erythritol 4-phosphate (MEP). The chain is 2-C-methyl-D-erythritol 4-phosphate cytidylyltransferase from Hahella chejuensis (strain KCTC 2396).